A 506-amino-acid polypeptide reads, in one-letter code: Acetaldehyde dehydrogenase 2 (506 aa).

Residue 240–245 (GETTTG) participates in NAD(+) binding. Active-site residues include E262 and C301.

The protein belongs to the aldehyde dehydrogenase family.

The enzyme catalyses an aldehyde + NAD(+) + H2O = a carboxylate + NADH + 2 H(+). It functions in the pathway alcohol metabolism; ethanol degradation; acetate from ethanol: step 2/2. The protein operates within ketone degradation; acetoin degradation. Its function is as follows. Involved in the catabolism of acetoin and ethanol. This Cupriavidus necator (strain ATCC 17699 / DSM 428 / KCTC 22496 / NCIMB 10442 / H16 / Stanier 337) (Ralstonia eutropha) protein is Acetaldehyde dehydrogenase 2 (acoD).